Consider the following 263-residue polypeptide: Imidazole glycerol phosphate synthase subunit HisF (263 aa).

Catalysis depends on residues Asp-11 and Asp-131.

This sequence belongs to the HisA/HisF family. In terms of assembly, heterodimer of HisH and HisF.

The protein resides in the cytoplasm. The catalysed reaction is 5-[(5-phospho-1-deoxy-D-ribulos-1-ylimino)methylamino]-1-(5-phospho-beta-D-ribosyl)imidazole-4-carboxamide + L-glutamine = D-erythro-1-(imidazol-4-yl)glycerol 3-phosphate + 5-amino-1-(5-phospho-beta-D-ribosyl)imidazole-4-carboxamide + L-glutamate + H(+). Its pathway is amino-acid biosynthesis; L-histidine biosynthesis; L-histidine from 5-phospho-alpha-D-ribose 1-diphosphate: step 5/9. Functionally, IGPS catalyzes the conversion of PRFAR and glutamine to IGP, AICAR and glutamate. The HisF subunit catalyzes the cyclization activity that produces IGP and AICAR from PRFAR using the ammonia provided by the HisH subunit. This Deinococcus geothermalis (strain DSM 11300 / CIP 105573 / AG-3a) protein is Imidazole glycerol phosphate synthase subunit HisF.